The chain runs to 516 residues: Maturase K (516 aa).

Belongs to the intron maturase 2 family. MatK subfamily.

The protein localises to the plastid. The protein resides in the chloroplast. In terms of biological role, usually encoded in the trnK tRNA gene intron. Probably assists in splicing its own and other chloroplast group II introns. The protein is Maturase K of Medeola virginiana (Indian cucumber root).